We begin with the raw amino-acid sequence, 998 residues long: Type II restriction enzyme and methyltransferase RM.Eco57I (998 aa).

In the C-terminal section; belongs to the N(4)/N(6)-methyltransferase family. Monomer.

It carries out the reaction Endonucleolytic cleavage of DNA to give specific double-stranded fragments with terminal 5'-phosphates.. It catalyses the reaction a 2'-deoxyadenosine in DNA + S-adenosyl-L-methionine = an N(6)-methyl-2'-deoxyadenosine in DNA + S-adenosyl-L-homocysteine + H(+). With respect to regulation, mg(2+) is absolutely required for DNA restriction. An E, G and S subtype restriction enzyme that recognizes the (non-palindromic) double-stranded sequence 5'-CTGAAG-3' and cleaves respectively 22 bases after C-1 and 14 bases before C'-1; cleavage of lambda DNA is never complete. Also acts as a methylase that causes specific methylation on A-5 in 5'-CTGAAG-3', the other strand is methylated by the M.Eco57I methylase. The chain is Type II restriction enzyme and methyltransferase RM.Eco57I from Escherichia coli.